The chain runs to 145 residues: MIIDITEIMDWIPHRYPFLLVDRVLKIDPNKSITGIKNVTVNEPQFTGHFPARPVMPGVLMVEAMAQLAAILVAKSLGSTKNKEVFLMTIENAKFRRIVQPGDTMHIHAVIDQQRANVWKFSSTVTVEGEIATESKFTAMIKDKT.

Histidine 49 is a catalytic residue.

Belongs to the thioester dehydratase family. FabZ subfamily.

It is found in the cytoplasm. The enzyme catalyses a (3R)-hydroxyacyl-[ACP] = a (2E)-enoyl-[ACP] + H2O. Its function is as follows. Involved in unsaturated fatty acids biosynthesis. Catalyzes the dehydration of short chain beta-hydroxyacyl-ACPs and long chain saturated and unsaturated beta-hydroxyacyl-ACPs. This is 3-hydroxyacyl-[acyl-carrier-protein] dehydratase FabZ from Rickettsia conorii (strain ATCC VR-613 / Malish 7).